A 248-amino-acid chain; its full sequence is tRNA pseudouridine synthase A (248 aa).

The Nucleophile role is filled by Asp53. Tyr111 contacts substrate.

This sequence belongs to the tRNA pseudouridine synthase TruA family. Homodimer.

It carries out the reaction uridine(38/39/40) in tRNA = pseudouridine(38/39/40) in tRNA. Formation of pseudouridine at positions 38, 39 and 40 in the anticodon stem and loop of transfer RNAs. The chain is tRNA pseudouridine synthase A from Listeria innocua serovar 6a (strain ATCC BAA-680 / CLIP 11262).